The primary structure comprises 494 residues: UPF0371 protein STER_1332 (494 aa).

It belongs to the UPF0371 family.

The polypeptide is UPF0371 protein STER_1332 (Streptococcus thermophilus (strain ATCC BAA-491 / LMD-9)).